A 104-amino-acid chain; its full sequence is Growth-regulated protein homolog (104 aa).

An N-terminal signal peptide occupies residues 1-31; sequence MAPAATAAAPRLLRAALLLLLLVAAGRRAAG. 2 disulfide bridges follow: Cys40-Cys66 and Cys42-Cys82.

Belongs to the intercrine alpha (chemokine CxC) family.

It is found in the secreted. Plays a role in monocyte adhesion to the endothelium. The polypeptide is Growth-regulated protein homolog (Oryctolagus cuniculus (Rabbit)).